Consider the following 118-residue polypeptide: MSFRKKTKQVKKVNLGFKIDCSQPVEDKVILIGEFAEFLKSKIKVGGKLGNLGENITISNDDKKINVQSTIPFSKRYLKYLTKKYLKKQDLRNYLYVTSSDKNSYQLRYFNIQQDQAE.

The protein belongs to the eukaryotic ribosomal protein eL22 family.

This chain is Large ribosomal subunit protein eL22 (RPL22), found in Tetrahymena thermophila (strain SB210).